The chain runs to 37 residues: MKIRASIRRICGKCRPIRRRKRVMIICSNPRHKQKQG.

The protein belongs to the bacterial ribosomal protein bL36 family.

The protein resides in the plastid. Its subcellular location is the chloroplast. In Pinus koraiensis (Korean pine), this protein is Large ribosomal subunit protein bL36c.